Reading from the N-terminus, the 141-residue chain is Hemoglobin subunit alpha (141 aa).

One can recognise a Globin domain in the interval 1–141 (VLSSTDKSNV…VSTVLTSKYR (141 aa)). The residue at position 3 (Ser3) is a Phosphoserine. N6-succinyllysine occurs at positions 7 and 11. N6-acetyllysine; alternate is present on Lys16. At Lys16 the chain carries N6-succinyllysine; alternate. Tyr24 is modified (phosphotyrosine). Phosphoserine is present on Ser35. N6-succinyllysine is present on Lys40. Residue His58 participates in O2 binding. A heme b-binding site is contributed by His87. A Phosphoserine modification is found at Ser102. Position 108 is a phosphothreonine (Thr108). Ser124 and Ser131 each carry phosphoserine. A phosphothreonine mark is found at Thr134 and Thr137. Phosphoserine is present on Ser138.

It belongs to the globin family. As to quaternary structure, heterotetramer of two alpha chains and two beta chains. Red blood cells.

Functionally, involved in oxygen transport from the lung to the various peripheral tissues. In terms of biological role, hemopressin acts as an antagonist peptide of the cannabinoid receptor CNR1. Hemopressin-binding efficiently blocks cannabinoid receptor CNR1 and subsequent signaling. The chain is Hemoglobin subunit alpha (HBA) from Pteropus alecto (Black flying fox).